Here is a 389-residue protein sequence, read N- to C-terminus: Trans-2-enoyl-CoA reductase [NADH] (389 aa).

Residues 47–52, 73–74, 110–111, and 138–139 contribute to the NAD(+) site; these read GASTGY, FE, DA, and LA. Tyr-224 is a substrate binding site. The Proton donor role is filled by Tyr-234. Residues Lys-243 and 272–274 contribute to the NAD(+) site; that span reads LVT.

The protein belongs to the TER reductase family. In terms of assembly, monomer.

It catalyses the reaction a 2,3-saturated acyl-CoA + NAD(+) = a (2E)-enoyl-CoA + NADH + H(+). It participates in lipid metabolism; fatty acid biosynthesis. Its function is as follows. Involved in the fatty acid synthesis (FAS II). Catalyzes the reduction of a carbon-carbon double bond in an enoyl moiety that is covalently linked to a coenzyme A (CoA). The chain is Trans-2-enoyl-CoA reductase [NADH] from Clostridium perfringens (strain 13 / Type A).